A 67-amino-acid chain; its full sequence is Large ribosomal subunit protein bL32 (67 aa).

The span at 1–19 shows a compositional bias: basic residues; it reads MAVPKRKMSRANTRARRAQ. Residues 1–20 are disordered; that stretch reads MAVPKRKMSRANTRARRAQW.

Belongs to the bacterial ribosomal protein bL32 family.

This is Large ribosomal subunit protein bL32 from Paenarthrobacter aurescens (strain TC1).